Here is a 234-residue protein sequence, read N- to C-terminus: MPTQDSAAKQADDGFQLVQKKSRKRKMTMDMDDADPKAGAVVYPPAKQEKLEGKGELRRIAVPAHRYTPLKDNWLKIFTPVVEHLHLQIRFNLKSRCVEIRTCKETEEPSALQKAADFVRAFTLGFEVDDALALVRLDELFLESFDVQDVKPLKGDHLARCIGRLAGKGGRTKFTIENVTKTRIVLADSKVHILGSYQNIRAARTALCNLVLGKPPSKVYGTMRQLASRIGERF.

The disordered stretch occupies residues 1-39; sequence MPTQDSAAKQADDGFQLVQKKSRKRKMTMDMDDADPKAG. Residues 158 to 207 form the KH domain; it reads LARCIGRLAGKGGRTKFTIENVTKTRIVLADSKVHILGSYQNIRAARTAL.

It belongs to the PNO1 family.

The protein localises to the nucleus. The protein resides in the nucleolus. The sequence is that of RNA-binding protein pno1 from Ixodes scapularis (Black-legged tick).